The following is a 308-amino-acid chain: Glutathione synthetase (308 aa).

One can recognise an ATP-grasp domain in the interval 120 to 304 (KLGALRFNNL…LADQVIARLL (185 aa)). ATP is bound at residue 146 to 202 (AREQEEVVLKPLGGRAGQGLVRVAGAAPGLEALLELVTDQEQLPVMVQRFLPAVIEG). Mg(2+)-binding residues include Glu275 and Asn277.

This sequence belongs to the prokaryotic GSH synthase family. Requires Mg(2+) as cofactor. It depends on Mn(2+) as a cofactor.

It carries out the reaction gamma-L-glutamyl-L-cysteine + glycine + ATP = glutathione + ADP + phosphate + H(+). It functions in the pathway sulfur metabolism; glutathione biosynthesis; glutathione from L-cysteine and L-glutamate: step 2/2. The sequence is that of Glutathione synthetase from Prochlorococcus marinus (strain MIT 9313).